Reading from the N-terminus, the 210-residue chain is Ribosomal RNA large subunit methyltransferase E (210 aa).

Positions 60, 62, 85, 101, and 126 each coordinate S-adenosyl-L-methionine. Residue K166 is the Proton acceptor of the active site.

The protein belongs to the class I-like SAM-binding methyltransferase superfamily. RNA methyltransferase RlmE family.

It localises to the cytoplasm. It catalyses the reaction uridine(2552) in 23S rRNA + S-adenosyl-L-methionine = 2'-O-methyluridine(2552) in 23S rRNA + S-adenosyl-L-homocysteine + H(+). Functionally, specifically methylates the uridine in position 2552 of 23S rRNA at the 2'-O position of the ribose in the fully assembled 50S ribosomal subunit. The sequence is that of Ribosomal RNA large subunit methyltransferase E from Bordetella pertussis (strain Tohama I / ATCC BAA-589 / NCTC 13251).